We begin with the raw amino-acid sequence, 283 residues long: Bifunctional protein FolD (283 aa).

NADP(+) contacts are provided by residues 165–167, S190, and I231; that span reads GAS.

The protein belongs to the tetrahydrofolate dehydrogenase/cyclohydrolase family. As to quaternary structure, homodimer.

The enzyme catalyses (6R)-5,10-methylene-5,6,7,8-tetrahydrofolate + NADP(+) = (6R)-5,10-methenyltetrahydrofolate + NADPH. It carries out the reaction (6R)-5,10-methenyltetrahydrofolate + H2O = (6R)-10-formyltetrahydrofolate + H(+). It participates in one-carbon metabolism; tetrahydrofolate interconversion. Functionally, catalyzes the oxidation of 5,10-methylenetetrahydrofolate to 5,10-methenyltetrahydrofolate and then the hydrolysis of 5,10-methenyltetrahydrofolate to 10-formyltetrahydrofolate. This Bordetella bronchiseptica (strain ATCC BAA-588 / NCTC 13252 / RB50) (Alcaligenes bronchisepticus) protein is Bifunctional protein FolD.